We begin with the raw amino-acid sequence, 101 residues long: Small ribosomal subunit protein uS14 (101 aa).

This sequence belongs to the universal ribosomal protein uS14 family. Part of the 30S ribosomal subunit. Contacts proteins S3 and S10.

Its function is as follows. Binds 16S rRNA, required for the assembly of 30S particles and may also be responsible for determining the conformation of the 16S rRNA at the A site. This Protochlamydia amoebophila (strain UWE25) protein is Small ribosomal subunit protein uS14.